Consider the following 173-residue polypeptide: Large ribosomal subunit protein uL10 (173 aa).

The protein belongs to the universal ribosomal protein uL10 family. In terms of assembly, part of the ribosomal stalk of the 50S ribosomal subunit. The N-terminus interacts with L11 and the large rRNA to form the base of the stalk. The C-terminus forms an elongated spine to which L12 dimers bind in a sequential fashion forming a multimeric L10(L12)X complex.

Functionally, forms part of the ribosomal stalk, playing a central role in the interaction of the ribosome with GTP-bound translation factors. This is Large ribosomal subunit protein uL10 from Geobacter sp. (strain M21).